Here is a 237-residue protein sequence, read N- to C-terminus: Purine nucleoside phosphorylase DeoD-type (237 aa).

H4 serves as a coordination point for a purine D-ribonucleoside. Phosphate contacts are provided by residues G20, R24, R43, and 87-90 (RVGT). Residues 179 to 181 (EME) and 203 to 204 (SD) contribute to the a purine D-ribonucleoside site. Residue D204 is the Proton donor of the active site.

It belongs to the PNP/UDP phosphorylase family. Homohexamer; trimer of homodimers.

The enzyme catalyses a purine D-ribonucleoside + phosphate = a purine nucleobase + alpha-D-ribose 1-phosphate. It catalyses the reaction a purine 2'-deoxy-D-ribonucleoside + phosphate = a purine nucleobase + 2-deoxy-alpha-D-ribose 1-phosphate. In terms of biological role, catalyzes the reversible phosphorolytic breakdown of the N-glycosidic bond in the beta-(deoxy)ribonucleoside molecules, with the formation of the corresponding free purine bases and pentose-1-phosphate. The chain is Purine nucleoside phosphorylase DeoD-type from Streptococcus pyogenes serotype M12 (strain MGAS2096).